The sequence spans 226 residues: Probable functional amyloid protease FapD (226 aa).

The N-terminal stretch at 1–18 (MRTLILSLLLLVDLTTQA) is a signal peptide. Residues 50 to 180 (QKTDFSCGAA…KGWNGIVFAV (131 aa)) form the Peptidase C39 domain. Residue Cys-56 is part of the active site.

This sequence belongs to the FapD family.

The protein resides in the periplasm. Functionally, probable protease that might be involved in processing fibril precursors. Upon overexpression of the endogenous six-gene locus (fapA-fapF), cells form large clumps during liquid growth, make large amounts of biofilm and produce amyloid fibrils. This chain is Probable functional amyloid protease FapD, found in Pseudomonas aeruginosa (strain ATCC 15692 / DSM 22644 / CIP 104116 / JCM 14847 / LMG 12228 / 1C / PRS 101 / PAO1).